The primary structure comprises 544 residues: Membrane protein insertase YidC (544 aa).

A helical transmembrane segment spans residues 6–26; that stretch reads NILLIGLLFVSFLLWQQWQAD. The interval 34–58 is disordered; sequence AAQTQSSIPASTVADSHSSDVPDAD. Over residues 39 to 49 the composition is skewed to polar residues; that stretch reads SSIPASTVADS. Helical transmembrane passes span 345 to 365, 423 to 443, 460 to 480, and 503 to 523; these read LLMFFHSIVGNWGFAIILITL, GGCLPILLQMPIFIALYWVLL, LSVQDPYYVLPILMGISMFVM, and VIFTVFFLWFPAGLVLYWLVG.

The protein belongs to the OXA1/ALB3/YidC family. Type 1 subfamily. In terms of assembly, interacts with the Sec translocase complex via SecD. Specifically interacts with transmembrane segments of nascent integral membrane proteins during membrane integration.

The protein localises to the cell inner membrane. Functionally, required for the insertion and/or proper folding and/or complex formation of integral membrane proteins into the membrane. Involved in integration of membrane proteins that insert both dependently and independently of the Sec translocase complex, as well as at least some lipoproteins. Aids folding of multispanning membrane proteins. This Shewanella halifaxensis (strain HAW-EB4) protein is Membrane protein insertase YidC.